We begin with the raw amino-acid sequence, 558 residues long: Dimethylaniline monooxygenase [N-oxide-forming] 4 (558 aa).

FAD contacts are provided by residues 9-13, E32, and 40-41; these read GAGVS and LW. NADP(+) is bound by residues 60–61 and 195–198; these read TN and TGGD. The chain crosses the membrane as a helical span at residues 517–537; it reads AWGAPVLLASLLLICKSSLFL.

It belongs to the FMO family. Requires FAD as cofactor. In terms of tissue distribution, liver.

It is found in the microsome membrane. Its subcellular location is the endoplasmic reticulum membrane. The enzyme catalyses N,N-dimethylaniline + NADPH + O2 + H(+) = N,N-dimethylaniline N-oxide + NADP(+) + H2O. In terms of biological role, this protein is involved in the oxidative metabolism of a variety of xenobiotics such as drugs and pesticides. In Homo sapiens (Human), this protein is Dimethylaniline monooxygenase [N-oxide-forming] 4 (FMO4).